The following is a 159-amino-acid chain: Endoribonuclease YbeY (159 aa).

Zn(2+)-binding residues include His114, His118, and His124.

Belongs to the endoribonuclease YbeY family. The cofactor is Zn(2+).

The protein localises to the cytoplasm. In terms of biological role, single strand-specific metallo-endoribonuclease involved in late-stage 70S ribosome quality control and in maturation of the 3' terminus of the 16S rRNA. This is Endoribonuclease YbeY from Pectobacterium atrosepticum (strain SCRI 1043 / ATCC BAA-672) (Erwinia carotovora subsp. atroseptica).